The chain runs to 188 residues: PRA1 family protein F4 (188 aa).

The segment covering 1 to 13 has biased composition (polar residues); the sequence is MANNDEITTSSHA. The tract at residues 1–25 is disordered; sequence MANNDEITTSSHASPAVNHESISRA. 4 consecutive transmembrane segments (helical) span residues 67-86, 90-107, 119-139, and 142-162; these read YFRSNYAIVILNVIFFSLIW, SLIVFTGLVFLWIFLYFL, IDDRAVLIGLSVITIVLLLLT, and TFNIVAALMAGAVLVLIHAVI.

This sequence belongs to the PRA1 family.

The protein resides in the endosome membrane. Functionally, may be involved in both secretory and endocytic intracellular trafficking in the endosomal/prevacuolar compartments. The polypeptide is PRA1 family protein F4 (PRA1F4) (Arabidopsis thaliana (Mouse-ear cress)).